Consider the following 380-residue polypeptide: Ubiquitin-like protein 7 (380 aa).

The Ubiquitin-like domain occupies 18-98; sequence APKSILRLPE…VLRKSWPEPD (81 aa). Residues 201–313 form a disordered region; the sequence is PMPGADSSSR…SSSVQSGTPI (113 aa). Ser230 bears the Phosphoserine mark. Composition is skewed to low complexity over residues 239-255 and 270-312; these read SARS…RPAS and SELA…SGTP. One can recognise a UBA domain in the interval 333–377; sequence SLQSQWQPQLQQLRDMGIQDDELSLRALQATGGDIQAALELIFAG.

In terms of assembly, binds ubiquitin. Interacts with MAVS; this interaction enhances TRIM21-dependent 'Lys-27'-linked polyubiquitination of MAVS. In terms of processing, deubiquitinated by OTUD4 which stabilizes UBL7 expression.

Interferon-stimulated protein that positively regulates RNA virus-triggered innate immune signaling. Mechanistically, promotes 'Lys-27'-linked polyubiquitination of MAVS through TRIM21 leading to enhanced the IFN signaling pathway. The chain is Ubiquitin-like protein 7 (UBL7) from Bos taurus (Bovine).